The following is a 938-amino-acid chain: Isoleucine--tRNA ligase (938 aa).

The short motif at 58-68 (PYANGSIHIGH) is the 'HIGH' region element. E561 provides a ligand contact to L-isoleucyl-5'-AMP. Residues 602-606 (KMSKS) carry the 'KMSKS' region motif. K605 provides a ligand contact to ATP. Zn(2+) contacts are provided by C901, C904, C921, and C924.

This sequence belongs to the class-I aminoacyl-tRNA synthetase family. IleS type 1 subfamily. Monomer. Zn(2+) is required as a cofactor.

It localises to the cytoplasm. The catalysed reaction is tRNA(Ile) + L-isoleucine + ATP = L-isoleucyl-tRNA(Ile) + AMP + diphosphate. Catalyzes the attachment of isoleucine to tRNA(Ile). As IleRS can inadvertently accommodate and process structurally similar amino acids such as valine, to avoid such errors it has two additional distinct tRNA(Ile)-dependent editing activities. One activity is designated as 'pretransfer' editing and involves the hydrolysis of activated Val-AMP. The other activity is designated 'posttransfer' editing and involves deacylation of mischarged Val-tRNA(Ile). This is Isoleucine--tRNA ligase from Erwinia tasmaniensis (strain DSM 17950 / CFBP 7177 / CIP 109463 / NCPPB 4357 / Et1/99).